Consider the following 580-residue polypeptide: tRNA-guanine(15) transglycosylase (580 aa).

The active-site Nucleophile is Asp91. Substrate contacts are provided by Asp126 and Ala192. 3 residues coordinate Zn(2+): Cys275, Cys277, and Cys280. The region spanning 504-579 (RMRVVVDEDA…LAVKVRRGVE (76 aa)) is the PUA domain.

It belongs to the archaeosine tRNA-ribosyltransferase family. The cofactor is Zn(2+).

The catalysed reaction is guanosine(15) in tRNA + 7-cyano-7-deazaguanine = 7-cyano-7-carbaguanosine(15) in tRNA + guanine. It functions in the pathway tRNA modification; archaeosine-tRNA biosynthesis. Its function is as follows. Exchanges the guanine residue with 7-cyano-7-deazaguanine (preQ0) at position 15 in the dihydrouridine loop (D-loop) of archaeal tRNAs. This Thermococcus kodakarensis (strain ATCC BAA-918 / JCM 12380 / KOD1) (Pyrococcus kodakaraensis (strain KOD1)) protein is tRNA-guanine(15) transglycosylase.